Reading from the N-terminus, the 222-residue chain is Germin-like protein subfamily 1 member 16 (222 aa).

Residues 1–22 (MRVSQSLIPFAIIALVLSFVNA) form the signal peptide. C32 and C48 form a disulfide bridge. The 152-residue stretch at 62 to 213 (SGLNVPGNTN…AFQLDANVVK (152 aa)) folds into the Cupin type-1 domain. N77 carries N-linked (GlcNAc...) asparagine glycosylation. Positions 110, 112, 117, and 159 each coordinate Mn(2+).

Belongs to the germin family. Oligomer (believed to be a pentamer but probably hexamer).

The protein resides in the secreted. Its subcellular location is the extracellular space. It localises to the apoplast. In terms of biological role, may play a role in plant defense. Probably has no oxalate oxidase activity even if the active site is conserved. This chain is Germin-like protein subfamily 1 member 16, found in Arabidopsis thaliana (Mouse-ear cress).